Reading from the N-terminus, the 328-residue chain is N-acetyl-gamma-glutamyl-phosphate reductase (328 aa).

Cys-143 is an active-site residue.

This sequence belongs to the NAGSA dehydrogenase family. Type 1 subfamily.

It is found in the cytoplasm. It carries out the reaction N-acetyl-L-glutamate 5-semialdehyde + phosphate + NADP(+) = N-acetyl-L-glutamyl 5-phosphate + NADPH + H(+). It participates in amino-acid biosynthesis; L-arginine biosynthesis; N(2)-acetyl-L-ornithine from L-glutamate: step 3/4. Catalyzes the NADPH-dependent reduction of N-acetyl-5-glutamyl phosphate to yield N-acetyl-L-glutamate 5-semialdehyde. This chain is N-acetyl-gamma-glutamyl-phosphate reductase, found in Methanoregula boonei (strain DSM 21154 / JCM 14090 / 6A8).